The primary structure comprises 884 residues: MSGVNDIRSTFLDYFKKNGHEIVPSSPLVPRNDPTLMFTNAGMVQFKNVFTGLEKRPYSTATTSQKCVRAGGKHNDLDNVGYTARHLTFFEMLGNFSFGDYFKENAIELAWKLVTEGFDLPKNRLLVTVYSEDEEAATLWKKIAGFSDDKIIRISTSDNFWQMGDTGPCGPCSEIFIDQGENVWGGPPGSPEEDGDRFLEFWNLVFMQFEQTEPGVRNPLPRPSIDTGMGLERMACILQGVQSVFDTDLFRTLIGTIEDTMGVKAEGSASHRVIADHLRSSAFLIADGVLPSNEGRGYVLRRIMRRAMRHAQLLGAKEPLVYKLLPTLVQQMGRAYPELVRAEALISETLKLEENRFRKTLERGLSLLSDATTDLAKGDMLDGETAFKLYDTYGFPLDLTQDALRAREIGVDISGFTDAMQRQKAEARSHWAGSGEKATETVWFELKEKHGATEFLGYDTETAEGVVQAIVKDGAVAAEASAGDKVQIVVSQTPFYGESGGQMGDTGVISSDHGKIEISDTQKRGEGLFVHQGTVVDGVFKDGDAVVLTVDHARRSRLRANHSATHLLHEALREVLGTHVAQKGSLVAPERLRFDVSHPKPMSAEELKIVEDMANEIVLQNSPVTTRLMSVDDAIAEGAMALFGEKYGDEVRVVAMGEGVRGAKAGKPYSIELCGGTHVGATGQIGLIRVLGESAVGAGVRRIEAVTGESAREYLAEQDERVKTLAASLKVQPGEVLSRVEALMDERRKLEKELADAKRKLAMGGGQGGSVDAVREVAGVKFLGKAISGVDPKDLKGLADDGKTSIGSGVVALVGVSDDGKASAVVAVTPDLVQRYSAVDLVRIASAALGGKGGGGRPDMAQAGGPDGSKADEAIEAVAVALAG.

Zn(2+)-binding residues include His-562, His-566, Cys-674, and His-678.

It belongs to the class-II aminoacyl-tRNA synthetase family. It depends on Zn(2+) as a cofactor.

It localises to the cytoplasm. It carries out the reaction tRNA(Ala) + L-alanine + ATP = L-alanyl-tRNA(Ala) + AMP + diphosphate. In terms of biological role, catalyzes the attachment of alanine to tRNA(Ala) in a two-step reaction: alanine is first activated by ATP to form Ala-AMP and then transferred to the acceptor end of tRNA(Ala). Also edits incorrectly charged Ser-tRNA(Ala) and Gly-tRNA(Ala) via its editing domain. This is Alanine--tRNA ligase from Rhizobium johnstonii (strain DSM 114642 / LMG 32736 / 3841) (Rhizobium leguminosarum bv. viciae).